A 280-amino-acid chain; its full sequence is F-box only protein 27 (280 aa).

The 48-residue stretch at 20-67 folds into the F-box domain; sequence VLDLSRLPPELLLLVLSHVPPRTLLMHCRRVCRAWRALVDGQALWLLL. Positions 101–277 constitute an FBA domain; that stretch reads FCALRPLGRN…VTNSSVIIRV (177 aa).

In terms of assembly, part of a SCF (SKP1-cullin-F-box) protein ligase complex. Interacts with SKP1 and CUL1. As to expression, detected in brain, heart and muscle.

Substrate-recognition component of the SCF (SKP1-CUL1-F-box protein)-type E3 ubiquitin ligase complex. Able to recognize and bind complex-type oligosaccharides. This chain is F-box only protein 27 (Fbxo27), found in Mus musculus (Mouse).